A 181-amino-acid polypeptide reads, in one-letter code: Small ribosomal subunit protein uS4 (181 aa).

The 69-residue stretch at 104-172 (RRLQTIVYKK…SRPPVMSQQE (69 aa)) folds into the S4 RNA-binding domain.

Belongs to the universal ribosomal protein uS4 family. In terms of assembly, part of the 30S ribosomal subunit. Contacts protein S5. The interaction surface between S4 and S5 is involved in control of translational fidelity.

In terms of biological role, one of the primary rRNA binding proteins, it binds directly to 16S rRNA where it nucleates assembly of the body of the 30S subunit. Its function is as follows. With S5 and S12 plays an important role in translational accuracy. The polypeptide is Small ribosomal subunit protein uS4 (Saccharolobus solfataricus (strain ATCC 35092 / DSM 1617 / JCM 11322 / P2) (Sulfolobus solfataricus)).